A 496-amino-acid chain; its full sequence is RNA-binding motif protein, Y chromosome, family 1 member E (496 aa).

The RRM domain occupies 8–85 (GKLFIGGLNR…KAIKVEQAKK (78 aa)). Disordered stretches follow at residues 67–348 (DMNG…PHRD) and 453–496 (DQRN…SSRY). 2 stretches are compositionally biased toward low complexity: residues 97-114 (PASSRNRSPSGSLRSARG) and 149-159 (PVKRGPSSRSG). Over residues 175–184 (NSWMGSQGPM) the composition is skewed to polar residues. 6 stretches are compositionally biased toward basic and acidic residues: residues 204 to 214 (RNDRMSTRHDG), 242 to 253 (DNGHSNRDEHSS), 276 to 289 (AYRDYGHSRRDESY), 313 to 326 (GYRDYGHSRRHESY), 335 to 348 (SSRETRDYAPPHRD), and 484 to 496 (GESRSEKGDSSRY).

As to quaternary structure, interacts with splicing factor proteins SFRS3/SRP20, TRA2B/SFRS10, KHDRBS1/SAM68 and KHDRBS3. As to expression, testis-specific.

It is found in the nucleus. In terms of biological role, RNA-binding protein which may be involved in spermatogenesis. Required for sperm development, possibly by participating in pre-mRNA splicing in the testis. This Homo sapiens (Human) protein is RNA-binding motif protein, Y chromosome, family 1 member E (RBMY1E).